Reading from the N-terminus, the 160-residue chain is Large ribosomal subunit protein uL15 (160 aa).

Positions 1–11 (MKLNELRDNHG) are enriched in basic and acidic residues. Residues 1-39 (MKLNELRDNHGARPKSKRLGRGIGSGKGKTSGKGVKGQK) form a disordered region. Positions 21 to 35 (RGIGSGKGKTSGKGV) are enriched in gly residues.

Belongs to the universal ribosomal protein uL15 family. In terms of assembly, part of the 50S ribosomal subunit.

In terms of biological role, binds to the 23S rRNA. The polypeptide is Large ribosomal subunit protein uL15 (Granulibacter bethesdensis (strain ATCC BAA-1260 / CGDNIH1)).